Consider the following 386-residue polypeptide: 1-deoxy-D-xylulose 5-phosphate reductoisomerase (386 aa).

6 residues coordinate NADPH: Ser10, Gly11, Ser12, Val13, Asn38, and Asn120. Position 121 (Lys121) interacts with 1-deoxy-D-xylulose 5-phosphate. Glu122 lines the NADPH pocket. Asp146 provides a ligand contact to Mn(2+). Positions 147, 148, 172, and 195 each coordinate 1-deoxy-D-xylulose 5-phosphate. Glu148 serves as a coordination point for Mn(2+). An NADPH-binding site is contributed by Gly201. The 1-deoxy-D-xylulose 5-phosphate site is built by Ser208, Asn213, Lys214, and Glu217. Mn(2+) is bound at residue Glu217.

It belongs to the DXR family. Requires Mg(2+) as cofactor. The cofactor is Mn(2+).

The enzyme catalyses 2-C-methyl-D-erythritol 4-phosphate + NADP(+) = 1-deoxy-D-xylulose 5-phosphate + NADPH + H(+). It functions in the pathway isoprenoid biosynthesis; isopentenyl diphosphate biosynthesis via DXP pathway; isopentenyl diphosphate from 1-deoxy-D-xylulose 5-phosphate: step 1/6. Functionally, catalyzes the NADPH-dependent rearrangement and reduction of 1-deoxy-D-xylulose-5-phosphate (DXP) to 2-C-methyl-D-erythritol 4-phosphate (MEP). The polypeptide is 1-deoxy-D-xylulose 5-phosphate reductoisomerase (Leptospira biflexa serovar Patoc (strain Patoc 1 / Ames)).